The sequence spans 362 residues: Glucuronokinase 1 (362 aa).

126 to 136 is an ATP binding site; that stretch reads PRQTGLSGSSA. Aspartate 179 functions as the Proton acceptor in the catalytic mechanism.

This sequence belongs to the GHMP kinase family. Mg(2+) serves as cofactor. The cofactor is Mn(2+). It depends on Co(2+) as a cofactor. In terms of tissue distribution, highly expressed in pollen. Detected in seedlings, inflorescences, seeds, leaves and roots.

The enzyme catalyses D-glucuronate + ATP = 1-phospho-alpha-D-glucuronate + ADP + H(+). In terms of biological role, sugar-1-kinase with a strict substrate specificity for D-glucuronic acid and ATP. Involved in the biosynthesis of UDP-glucuronic acid (UDP-GlcA), providing nucleotide sugars for cell-wall polymers. May be also involved in a salvage pathway for glucuronic acid. The polypeptide is Glucuronokinase 1 (GLCAK1) (Arabidopsis thaliana (Mouse-ear cress)).